The following is a 348-amino-acid chain: Uroporphyrinogen decarboxylase (348 aa).

Substrate contacts are provided by residues Arg27–Arg31, Phe46, Asp76, Tyr152, Ser207, and His320.

The protein belongs to the uroporphyrinogen decarboxylase family. As to quaternary structure, homodimer.

Its subcellular location is the cytoplasm. The enzyme catalyses uroporphyrinogen III + 4 H(+) = coproporphyrinogen III + 4 CO2. It participates in porphyrin-containing compound metabolism; protoporphyrin-IX biosynthesis; coproporphyrinogen-III from 5-aminolevulinate: step 4/4. Catalyzes the decarboxylation of four acetate groups of uroporphyrinogen-III to yield coproporphyrinogen-III. In Bacillus cereus (strain G9842), this protein is Uroporphyrinogen decarboxylase.